The chain runs to 430 residues: Adenylosuccinate synthetase (430 aa).

GTP-binding positions include 12–18 and 40–42; these read GDEGKGK and GHT. The active-site Proton acceptor is the D13. Mg(2+) is bound by residues D13 and G40. Residues 13–16, 38–41, T129, R143, Q223, T238, and R302 contribute to the IMP site; these read DEGK and NAGH. H41 serves as the catalytic Proton donor. 298–304 lines the substrate pocket; it reads TTTGRPR. GTP-binding positions include R304, 330–332, and 412–414; these read KLD and SVG.

Belongs to the adenylosuccinate synthetase family. Homodimer. Mg(2+) serves as cofactor.

It localises to the cytoplasm. The enzyme catalyses IMP + L-aspartate + GTP = N(6)-(1,2-dicarboxyethyl)-AMP + GDP + phosphate + 2 H(+). It participates in purine metabolism; AMP biosynthesis via de novo pathway; AMP from IMP: step 1/2. Plays an important role in the de novo pathway of purine nucleotide biosynthesis. Catalyzes the first committed step in the biosynthesis of AMP from IMP. The chain is Adenylosuccinate synthetase from Desulforudis audaxviator (strain MP104C).